Here is a 157-residue protein sequence, read N- to C-terminus: 2-C-methyl-D-erythritol 2,4-cyclodiphosphate synthase (157 aa).

A divalent metal cation is bound by residues Asp-8 and His-10. Residues 8–10 and 34–35 each bind 4-CDP-2-C-methyl-D-erythritol 2-phosphate; these read DVH and HS. His-42 serves as a coordination point for a divalent metal cation. Residues 56–58, 61–65, 132–135, Phe-139, and Arg-142 contribute to the 4-CDP-2-C-methyl-D-erythritol 2-phosphate site; these read DLG, FPDTD, and TTTE.

This sequence belongs to the IspF family. Homotrimer. The cofactor is a divalent metal cation.

The catalysed reaction is 4-CDP-2-C-methyl-D-erythritol 2-phosphate = 2-C-methyl-D-erythritol 2,4-cyclic diphosphate + CMP. It functions in the pathway isoprenoid biosynthesis; isopentenyl diphosphate biosynthesis via DXP pathway; isopentenyl diphosphate from 1-deoxy-D-xylulose 5-phosphate: step 4/6. In terms of biological role, involved in the biosynthesis of isopentenyl diphosphate (IPP) and dimethylallyl diphosphate (DMAPP), two major building blocks of isoprenoid compounds. Catalyzes the conversion of 4-diphosphocytidyl-2-C-methyl-D-erythritol 2-phosphate (CDP-ME2P) to 2-C-methyl-D-erythritol 2,4-cyclodiphosphate (ME-CPP) with a corresponding release of cytidine 5-monophosphate (CMP). This Salinibacter ruber (strain DSM 13855 / M31) protein is 2-C-methyl-D-erythritol 2,4-cyclodiphosphate synthase.